The sequence spans 476 residues: Aspartyl/glutamyl-tRNA(Asn/Gln) amidotransferase subunit B (476 aa).

This sequence belongs to the GatB/GatE family. GatB subfamily. As to quaternary structure, heterotrimer of A, B and C subunits.

The enzyme catalyses L-glutamyl-tRNA(Gln) + L-glutamine + ATP + H2O = L-glutaminyl-tRNA(Gln) + L-glutamate + ADP + phosphate + H(+). The catalysed reaction is L-aspartyl-tRNA(Asn) + L-glutamine + ATP + H2O = L-asparaginyl-tRNA(Asn) + L-glutamate + ADP + phosphate + 2 H(+). Allows the formation of correctly charged Asn-tRNA(Asn) or Gln-tRNA(Gln) through the transamidation of misacylated Asp-tRNA(Asn) or Glu-tRNA(Gln) in organisms which lack either or both of asparaginyl-tRNA or glutaminyl-tRNA synthetases. The reaction takes place in the presence of glutamine and ATP through an activated phospho-Asp-tRNA(Asn) or phospho-Glu-tRNA(Gln). The protein is Aspartyl/glutamyl-tRNA(Asn/Gln) amidotransferase subunit B of Latilactobacillus sakei subsp. sakei (strain 23K) (Lactobacillus sakei subsp. sakei).